Here is an 87-residue protein sequence, read N- to C-terminus: DNA polymerase epsilon subunit C (87 aa).

DNA polymerase epsilon is a heterotetramer consisting of cdc20/Pol2, dpb2, dpb3, and dpb4. Also forms a heterodimer consisting dpb3 and dpb4. Interacts directly with cdc20/pol2 and dpb4.

It localises to the nucleus. Functionally, as accessory component of the DNA polymerase epsilon (DNA polymerase II) participates in chromosomal DNA replication. It is required during synthesis of the leading and lagging DNA strands at the replication fork and binds at/or near replication origins and moves along DNA with the replication fork. It has 3'-5' proofreading exonuclease activity that correct errors arising during DNA replication. It is also involved in DNA synthesis during DNA repair. The dpb3-dpb4 dimer associates with histone deacetylases, chromatin remodelers, and histones and plays a crucial role in the inheritance of histone hypoacetylation and H3K9 methylation in heterochromatin. The dpb3-dpb4 dimer is also required for the recruitment of sir2 to heterochromatin. In Schizosaccharomyces pombe (strain 972 / ATCC 24843) (Fission yeast), this protein is DNA polymerase epsilon subunit C.